The chain runs to 463 residues: Glutamate--tRNA ligase (463 aa).

A 'HIGH' region motif is present at residues 9–19 (PSPTGYLHVGG). Over residues 115–129 (AGEKPRYDGTWRPEA) the composition is skewed to basic and acidic residues. A disordered region spans residues 115–136 (AGEKPRYDGTWRPEAGKTLPAI). Positions 241 to 245 (KLSKR) match the 'KMSKS' region motif. Residue Lys-244 coordinates ATP.

It belongs to the class-I aminoacyl-tRNA synthetase family. Glutamate--tRNA ligase type 1 subfamily. In terms of assembly, monomer.

The protein localises to the cytoplasm. It carries out the reaction tRNA(Glu) + L-glutamate + ATP = L-glutamyl-tRNA(Glu) + AMP + diphosphate. Its function is as follows. Catalyzes the attachment of glutamate to tRNA(Glu) in a two-step reaction: glutamate is first activated by ATP to form Glu-AMP and then transferred to the acceptor end of tRNA(Glu). In Janthinobacterium sp. (strain Marseille) (Minibacterium massiliensis), this protein is Glutamate--tRNA ligase.